The following is a 160-amino-acid chain: ATP synthase subunit b (160 aa).

The chain crosses the membrane as a helical span at residues 15–35 (LAIVIGVLFWFLRGFLGGILE).

It belongs to the ATPase B chain family. In terms of assembly, F-type ATPases have 2 components, F(1) - the catalytic core - and F(0) - the membrane proton channel. F(1) has five subunits: alpha(3), beta(3), gamma(1), delta(1), epsilon(1). F(0) has four main subunits: a(1), b(1), b'(1) and c(10-14). The alpha and beta chains form an alternating ring which encloses part of the gamma chain. F(1) is attached to F(0) by a central stalk formed by the gamma and epsilon chains, while a peripheral stalk is formed by the delta, b and b' chains.

The protein localises to the cellular thylakoid membrane. Its function is as follows. F(1)F(0) ATP synthase produces ATP from ADP in the presence of a proton or sodium gradient. F-type ATPases consist of two structural domains, F(1) containing the extramembraneous catalytic core and F(0) containing the membrane proton channel, linked together by a central stalk and a peripheral stalk. During catalysis, ATP synthesis in the catalytic domain of F(1) is coupled via a rotary mechanism of the central stalk subunits to proton translocation. Functionally, component of the F(0) channel, it forms part of the peripheral stalk, linking F(1) to F(0). This Synechococcus sp. (strain CC9902) protein is ATP synthase subunit b.